The chain runs to 172 residues: MKRDKKEQVVSEVSEKLRRSQGIYLTEFQGLSVARMAELRNEFRKAGVEYRVVKNTLIKKALSDMEGADKLAPALKSTTAVAFGYDDPIAPARVITKFSKTNEALKFKMAAIDGVVFGSDKLPALSEMLTKTENIGRAAGVINNVVASVPMVVNAVMRNLVSVIDQVGKQKQ.

This sequence belongs to the universal ribosomal protein uL10 family. Part of the ribosomal stalk of the 50S ribosomal subunit. The N-terminus interacts with L11 and the large rRNA to form the base of the stalk. The C-terminus forms an elongated spine to which L12 dimers bind in a sequential fashion forming a multimeric L10(L12)X complex.

Its function is as follows. Forms part of the ribosomal stalk, playing a central role in the interaction of the ribosome with GTP-bound translation factors. This is Large ribosomal subunit protein uL10 from Chlorobium luteolum (strain DSM 273 / BCRC 81028 / 2530) (Pelodictyon luteolum).